Consider the following 221-residue polypeptide: Oxaloacetate tautomerase FAHD1, mitochondrial (221 aa).

Residues 1–24 constitute a mitochondrion transit peptide; sequence MAASRPLSRFWEWGKNIVCVGRNY. Residue Ser37 is modified to Phosphoserine. 3 residues coordinate Mg(2+): Glu68, Glu70, and Asp99. Lys110 is modified (N6-acetyllysine). An N6-succinyllysine modification is found at Lys112.

The protein belongs to the FAH family. In terms of assembly, homodimer. It depends on Mg(2+) as a cofactor. Mn(2+) serves as cofactor.

The protein localises to the mitochondrion. Its subcellular location is the cytoplasm. It is found in the cytosol. The catalysed reaction is oxaloacetate = enol-oxaloacetate. It carries out the reaction oxaloacetate + H(+) = pyruvate + CO2. It catalyses the reaction a 3-acylpyruvate + H2O = a carboxylate + pyruvate + H(+). The enzyme catalyses acetylpyruvate + H2O = acetate + pyruvate + H(+). The catalysed reaction is 3-fumarylpyruvate + H2O = fumarate + pyruvate + H(+). Its activity is regulated as follows. Oxaloacetate decarboxylation is competitively inhibited by oxalate. Its function is as follows. Tautomerase that converts enol-oxaloacetate, a strong inhibitor of succinate dehydrogenase, to the physiological keto form of oxaloacetate. It is thereby required to maximize aerobic respiration efficiency by preventing succinate dehydrogenase inhibition. Also acts as a weak oxaloacetate decarboxylase (ODx), catalyzing the decarboxylation of oxaloacetate (OAA) to pyruvate and CO(2), and as such is likely a regulatory enzyme in the TCA cycle. Also displays acylpyruvase activity, being able to hydrolyze acetylpyruvate and fumarylpyruvate in vitro. This Bos taurus (Bovine) protein is Oxaloacetate tautomerase FAHD1, mitochondrial.